Here is a 149-residue protein sequence, read N- to C-terminus: Evolved beta-galactosidase subunit beta (149 aa).

Heterooctamer of 4 alpha and 4 beta subunits.

Functionally, required for full activity of the EbgA enzyme. Exact function not known. This Escherichia coli O6:H1 (strain CFT073 / ATCC 700928 / UPEC) protein is Evolved beta-galactosidase subunit beta (ebgC).